Here is a 517-residue protein sequence, read N- to C-terminus: Phosphatase and actin regulator 3 (517 aa).

Residues 1-24 (MDQTPPARSEPLVSGIRTPPVRRN) are disordered. Thr29 is modified (phosphothreonine). 2 disordered regions span residues 41 to 247 (KKKN…RPLP) and 260 to 320 (ATKH…SEEN). The RPEL 1 repeat unit spans residues 52–77 (SALEKKMAGRQGREELIKQGLLEMME). A compositionally biased stretch (basic and acidic residues) spans 54–68 (LEKKMAGRQGREELI). 2 stretches are compositionally biased toward polar residues: residues 92–129 (QPAQSEPSAGEQETLTSEGVQPGSPSASGTDQASQDEL) and 157–172 (LPTTDEPSQEALSGSL). Residues 187–198 (PSPPLLPTPPPK) show a composition bias toward pro residues. Ser188 carries the phosphoserine modification. A Phosphothreonine modification is found at Thr194. The span at 260–300 (ATKHRQDSFQGRECRGSPKKRMDVRLSRTSSMERGKERDEA) shows a compositional bias: basic and acidic residues. RPEL repeat units lie at residues 359 to 384 (ELLAVKLRNRPSKQELEDRNIFPRRT), 397 to 422 (MKLSKRLSQRPAVEELERRNILKQRN), and 435 to 460 (QRLTRKLNQRPTVDELRDRKILIRFS). The stretch at 408–444 (AVEELERRNILKQRNDQTEQEERREIKQRLTRKLNQR) forms a coiled coil.

Belongs to the phosphatase and actin regulator family. As to quaternary structure, binds actin and PPP1CA; thus inhibiting the protein phosphatase 1 (PP1) activity. Diffusely expressed throughout the brain cortex, with highest levels in the cortex and the hippocampus and lower levels in the striatum and thalamus.

The protein localises to the nucleus matrix. The polypeptide is Phosphatase and actin regulator 3 (Phactr3) (Rattus norvegicus (Rat)).